The chain runs to 1358 residues: Probable aldehyde oxidase 1 (1358 aa).

One can recognise a 2Fe-2S ferredoxin-type domain in the interval 4-91; that stretch reads AAAVVAVNGE…HCAVTTSEGI (88 aa). The [2Fe-2S] cluster site is built by Cys-43, Cys-48, Cys-51, and Cys-73. Residues 236–418 form the FAD-binding PCMH-type domain; sequence AVTGDGCWFH…ISISIPDWCS (183 aa). Residues 540–567 are disordered; the sequence is KPENANNVPNGSCTTNGTTNGSAESTVD. The span at 549-561 shows a compositional bias: low complexity; that stretch reads NGSCTTNGTTNGS.

It belongs to the xanthine dehydrogenase family. In terms of assembly, aldehyde oxidases (AO) are homodimers and heterodimers of AO subunits. It depends on [2Fe-2S] cluster as a cofactor. FAD is required as a cofactor. Mo-molybdopterin serves as cofactor.

The enzyme catalyses an aldehyde + O2 + H2O = a carboxylate + H2O2 + H(+). The protein is Probable aldehyde oxidase 1 of Oryza sativa subsp. japonica (Rice).